A 273-amino-acid polypeptide reads, in one-letter code: Histidine racemase (273 aa).

Residue C72 is the Proton acceptor of the active site. The active-site Proton donor is the C211.

It belongs to the histidine racemase family. As to quaternary structure, homodimer.

It is found in the cytoplasm. It catalyses the reaction L-histidine = D-histidine. In terms of biological role, isomerase that catalyzes the conversion of L-histidine to D-histidine. Functions the biosynthesis of the metallophore staphylopine, which is involved in the acquisition of nickel, cobalt, zinc, copper, and iron, and thus enables bacterial growth inside the host, where metal access is limited. Therefore, this enzyme probably contributes to staphylococcal virulence. The reaction is reversible in vitro, the enzyme can produce D-histidine from the L-stereoisomer and vice versa. Appears to be specific for histidine as it cannot use other amino acids as substrate, including L-alanine and L-methionine. The sequence is that of Histidine racemase from Staphylococcus aureus (strain Mu50 / ATCC 700699).